Consider the following 231-residue polypeptide: Ubiquinone biosynthesis protein coq-4, mitochondrial (231 aa).

Residues His133, Asp134, His137, and Glu149 each contribute to the Zn(2+) site.

The protein belongs to the COQ4 family. As to quaternary structure, component of a multi-subunit COQ enzyme complex. Requires Zn(2+) as cofactor.

It is found in the mitochondrion inner membrane. The enzyme catalyses a 4-hydroxy-3-methoxy-5-(all-trans-polyprenyl)benzoate + H(+) = a 2-methoxy-6-(all-trans-polyprenyl)phenol + CO2. It participates in cofactor biosynthesis; ubiquinone biosynthesis. Functionally, lyase that catalyzes the C1-decarboxylation of 4-hydroxy-3-methoxy-5-(all-trans-polyprenyl)benzoic acid into 2-methoxy-6-(all-trans-polyprenyl)phenol during ubiquinone biosynthesis. This is Ubiquinone biosynthesis protein coq-4, mitochondrial from Caenorhabditis elegans.